Here is a 363-residue protein sequence, read N- to C-terminus: Spermidine/putrescine import ATP-binding protein PotA (363 aa).

The 231-residue stretch at Ile9–Ile239 folds into the ABC transporter domain. Gly41–Thr48 contributes to the ATP binding site.

The protein belongs to the ABC transporter superfamily. Spermidine/putrescine importer (TC 3.A.1.11.1) family. The complex is composed of two ATP-binding proteins (PotA), two transmembrane proteins (PotB and PotC) and a solute-binding protein (PotD).

The protein localises to the cell inner membrane. It catalyses the reaction ATP + H2O + polyamine-[polyamine-binding protein]Side 1 = ADP + phosphate + polyamineSide 2 + [polyamine-binding protein]Side 1.. Its function is as follows. Part of the ABC transporter complex PotABCD involved in spermidine/putrescine import. Responsible for energy coupling to the transport system. This is Spermidine/putrescine import ATP-binding protein PotA from Roseobacter denitrificans (strain ATCC 33942 / OCh 114) (Erythrobacter sp. (strain OCh 114)).